The chain runs to 223 residues: Killer cell lectin-like receptor subfamily B member 1B allele A (223 aa).

At 1–43 the chain is on the cytoplasmic side; sequence MDSTTLVYADLNLARIQEPKHDSPPSLSPDTCRCPRWHRLALK. The ITIM motif motif lies at 6–11; the sequence is LVYADL. The LCK-binding motif motif lies at 32–35; that stretch reads CRCP. A helical; Signal-anchor for type II membrane protein transmembrane segment spans residues 44–63; it reads FGCAGLILLVLVVIGLCVLV. The Extracellular segment spans residues 64–223; the sequence is LSVQKSSVQK…LNHETPSNDS (160 aa). One can recognise a C-type lectin domain in the interval 93–212; that stretch reads ECPQDWLSHR…STDNRWICQK (120 aa). 2 cysteine pairs are disulfide-bonded: cysteine 122–cysteine 210 and cysteine 189–cysteine 202.

Homodimer; disulfide-linked. Interacts with tyrosine kinase LCK. Binds PTPN6/SHP-1 in a phosphorylation-dependent manner. As to expression, expressed in NK cells and a subset of T-cells.

The protein localises to the membrane. Its function is as follows. Receptor for CLEC2D/OCIL. Ligand-binding contributes to inhibition of cytotoxic natural killer (NK) cells. May mediate MHC class I-independent 'missing-self' recognition of allografts, tumor cells and virus-infected cells. The polypeptide is Killer cell lectin-like receptor subfamily B member 1B allele A (Klrb1b) (Mus musculus (Mouse)).